The chain runs to 64 residues: DNA gyrase inhibitor YacG (64 aa).

Positions 9, 12, 28, and 32 each coordinate Zn(2+). The interval 45 to 64 is disordered; sequence NAIAGAPDMSDSDGWSEDQY. A compositionally biased stretch (acidic residues) spans 54 to 64; it reads SDSDGWSEDQY.

Belongs to the DNA gyrase inhibitor YacG family. In terms of assembly, interacts with GyrB. It depends on Zn(2+) as a cofactor.

In terms of biological role, inhibits all the catalytic activities of DNA gyrase by preventing its interaction with DNA. Acts by binding directly to the C-terminal domain of GyrB, which probably disrupts DNA binding by the gyrase. This chain is DNA gyrase inhibitor YacG, found in Vibrio parahaemolyticus serotype O3:K6 (strain RIMD 2210633).